The following is a 122-amino-acid chain: Large ribosomal subunit protein uL14 (122 aa).

The protein belongs to the universal ribosomal protein uL14 family. As to quaternary structure, part of the 50S ribosomal subunit. Forms a cluster with proteins L3 and L19. In the 70S ribosome, L14 and L19 interact and together make contacts with the 16S rRNA in bridges B5 and B8.

In terms of biological role, binds to 23S rRNA. Forms part of two intersubunit bridges in the 70S ribosome. The sequence is that of Large ribosomal subunit protein uL14 from Agrobacterium fabrum (strain C58 / ATCC 33970) (Agrobacterium tumefaciens (strain C58)).